Consider the following 165-residue polypeptide: 3-isopropylmalate dehydratase small subunit (165 aa).

The protein belongs to the LeuD family. LeuD type 2 subfamily. As to quaternary structure, heterodimer of LeuC and LeuD.

It carries out the reaction (2R,3S)-3-isopropylmalate = (2S)-2-isopropylmalate. Its pathway is amino-acid biosynthesis; L-leucine biosynthesis; L-leucine from 3-methyl-2-oxobutanoate: step 2/4. In terms of biological role, catalyzes the isomerization between 2-isopropylmalate and 3-isopropylmalate, via the formation of 2-isopropylmaleate. This chain is 3-isopropylmalate dehydratase small subunit, found in Hydrogenobaculum sp. (strain Y04AAS1).